The chain runs to 90 residues: Small ribosomal subunit protein uS15c (90 aa).

The protein belongs to the universal ribosomal protein uS15 family. In terms of assembly, part of the 30S ribosomal subunit.

The protein localises to the plastid. Its subcellular location is the chloroplast. The chain is Small ribosomal subunit protein uS15c (rps15-A) from Lolium perenne (Perennial ryegrass).